Here is a 100-residue protein sequence, read N- to C-terminus: Urease subunit gamma (100 aa).

It belongs to the urease gamma subunit family. In terms of assembly, heterotrimer of UreA (gamma), UreB (beta) and UreC (alpha) subunits. Three heterotrimers associate to form the active enzyme.

The protein localises to the cytoplasm. The catalysed reaction is urea + 2 H2O + H(+) = hydrogencarbonate + 2 NH4(+). Its pathway is nitrogen metabolism; urea degradation; CO(2) and NH(3) from urea (urease route): step 1/1. This chain is Urease subunit gamma, found in Cupriavidus taiwanensis (strain DSM 17343 / BCRC 17206 / CCUG 44338 / CIP 107171 / LMG 19424 / R1) (Ralstonia taiwanensis (strain LMG 19424)).